Here is a 98-residue protein sequence, read N- to C-terminus: NADH-ubiquinone oxidoreductase chain 4L (98 aa).

The next 3 membrane-spanning stretches (helical) occupy residues 1 to 21 (MTPV…GLAF), 29 to 49 (ALLC…LWAL), and 58 to 78 (VAPM…LALL).

The protein belongs to the complex I subunit 4L family.

It is found in the mitochondrion membrane. It carries out the reaction a ubiquinone + NADH + 5 H(+)(in) = a ubiquinol + NAD(+) + 4 H(+)(out). Core subunit of the mitochondrial membrane respiratory chain NADH dehydrogenase (Complex I) which catalyzes electron transfer from NADH through the respiratory chain, using ubiquinone as an electron acceptor. Part of the enzyme membrane arm which is embedded in the lipid bilayer and involved in proton translocation. This Salmo salar (Atlantic salmon) protein is NADH-ubiquinone oxidoreductase chain 4L (MT-ND4L).